Reading from the N-terminus, the 158-residue chain is 2-C-methyl-D-erythritol 2,4-cyclodiphosphate synthase (158 aa).

A divalent metal cation contacts are provided by Asp-9 and His-11. Residues 9 to 11 (DVH) and 35 to 36 (HS) each bind 4-CDP-2-C-methyl-D-erythritol 2-phosphate. Residue His-43 participates in a divalent metal cation binding. 4-CDP-2-C-methyl-D-erythritol 2-phosphate contacts are provided by residues 57-59 (DIG), 62-66 (FPDTD), 101-107 (AQAPKMA), 133-136 (TTTE), Phe-140, and Arg-143.

This sequence belongs to the IspF family. As to quaternary structure, homotrimer. Requires a divalent metal cation as cofactor.

It carries out the reaction 4-CDP-2-C-methyl-D-erythritol 2-phosphate = 2-C-methyl-D-erythritol 2,4-cyclic diphosphate + CMP. It participates in isoprenoid biosynthesis; isopentenyl diphosphate biosynthesis via DXP pathway; isopentenyl diphosphate from 1-deoxy-D-xylulose 5-phosphate: step 4/6. Functionally, involved in the biosynthesis of isopentenyl diphosphate (IPP) and dimethylallyl diphosphate (DMAPP), two major building blocks of isoprenoid compounds. Catalyzes the conversion of 4-diphosphocytidyl-2-C-methyl-D-erythritol 2-phosphate (CDP-ME2P) to 2-C-methyl-D-erythritol 2,4-cyclodiphosphate (ME-CPP) with a corresponding release of cytidine 5-monophosphate (CMP). This is 2-C-methyl-D-erythritol 2,4-cyclodiphosphate synthase from Vibrio vulnificus (strain CMCP6).